We begin with the raw amino-acid sequence, 132 residues long: MSRKRTSPNRNVQIADQIQRDLSELIMREVKDPRIGIVTIQSVELTPDYAHAKVYFTTLTGDPAATQQALNHASGHLHNLLFKRLHIHTVPTLHFHYDQTIEKAVAMSRLIDEANATRAKDDDEADAPAKDD.

The protein belongs to the RbfA family. In terms of assembly, monomer. Binds 30S ribosomal subunits, but not 50S ribosomal subunits or 70S ribosomes.

The protein resides in the cytoplasm. One of several proteins that assist in the late maturation steps of the functional core of the 30S ribosomal subunit. Associates with free 30S ribosomal subunits (but not with 30S subunits that are part of 70S ribosomes or polysomes). Required for efficient processing of 16S rRNA. May interact with the 5'-terminal helix region of 16S rRNA. The protein is Ribosome-binding factor A of Burkholderia multivorans (strain ATCC 17616 / 249).